The chain runs to 294 residues: Putative maltodextrin utilization protein YvdJ (294 aa).

Transmembrane regions (helical) follow at residues 35–55, 184–204, 228–248, and 249–269; these read LSFL…VSFV, MIMM…TFVL, IAIC…MVHF, and DLIT…SFAF.

The protein localises to the cell membrane. Functionally, could have a role in maltodextrin utilization. The polypeptide is Putative maltodextrin utilization protein YvdJ (yvdJ) (Bacillus subtilis (strain 168)).